Here is a 330-residue protein sequence, read N- to C-terminus: Electron transfer flavoprotein subunit alpha (330 aa).

Position 270 to 298 (270 to 298) interacts with FAD; sequence LYIACGISGAIQHLAGMSNSGTIVAINKN.

The protein belongs to the ETF alpha-subunit/FixB family. In terms of assembly, heterodimer of an alpha and a beta subunit. It depends on FAD as a cofactor.

Its function is as follows. The electron transfer flavoprotein serves as a specific electron acceptor for other dehydrogenases. It transfers the electrons to the main respiratory chain via ETF-ubiquinone oxidoreductase (ETF dehydrogenase). The chain is Electron transfer flavoprotein subunit alpha (etfA) from Thermoanaerobacterium thermosaccharolyticum (strain ATCC 7956 / DSM 571 / NCIMB 9385 / NCA 3814 / NCTC 13789 / WDCM 00135 / 2032) (Clostridium thermosaccharolyticum).